The primary structure comprises 472 residues: L-fuculokinase (472 aa).

This sequence belongs to the FGGY kinase family. A divalent metal cation serves as cofactor.

The enzyme catalyses L-fuculose + ATP = L-fuculose 1-phosphate + ADP + H(+). It participates in carbohydrate degradation; L-fucose degradation; L-lactaldehyde and glycerone phosphate from L-fucose: step 2/3. In terms of biological role, catalyzes the phosphorylation of L-fuculose. The protein is L-fuculokinase of Salmonella typhi.